Consider the following 567-residue polypeptide: Proline--tRNA ligase (567 aa).

This sequence belongs to the class-II aminoacyl-tRNA synthetase family. ProS type 1 subfamily. As to quaternary structure, homodimer.

The protein resides in the cytoplasm. It catalyses the reaction tRNA(Pro) + L-proline + ATP = L-prolyl-tRNA(Pro) + AMP + diphosphate. Functionally, catalyzes the attachment of proline to tRNA(Pro) in a two-step reaction: proline is first activated by ATP to form Pro-AMP and then transferred to the acceptor end of tRNA(Pro). As ProRS can inadvertently accommodate and process non-cognate amino acids such as alanine and cysteine, to avoid such errors it has two additional distinct editing activities against alanine. One activity is designated as 'pretransfer' editing and involves the tRNA(Pro)-independent hydrolysis of activated Ala-AMP. The other activity is designated 'posttransfer' editing and involves deacylation of mischarged Ala-tRNA(Pro). The misacylated Cys-tRNA(Pro) is not edited by ProRS. This is Proline--tRNA ligase from Streptomyces griseus subsp. griseus (strain JCM 4626 / CBS 651.72 / NBRC 13350 / KCC S-0626 / ISP 5235).